A 203-amino-acid polypeptide reads, in one-letter code: MPYIPMPYVVEQTHRGERSYDIYSRLLKDRIIFLGTPVDDDVANVIIAQLLFLESEDPDKDINLYINSPGGSVTSGLAIYDTMQYVKPQVSTICLGQAASMGAFLLAGGAAGKRFAVPNARIMIHQLSGGFQGQATDIEIQAKEALRLKAKLNEIMARHTRQPIERIERDTERDYFMSAGEAKEYGLIDDVFLHKKAAEKKPQ.

Residue S100 is the Nucleophile of the active site. H125 is an active-site residue.

The protein belongs to the peptidase S14 family. In terms of assembly, fourteen ClpP subunits assemble into 2 heptameric rings which stack back to back to give a disk-like structure with a central cavity, resembling the structure of eukaryotic proteasomes.

It localises to the cytoplasm. The enzyme catalyses Hydrolysis of proteins to small peptides in the presence of ATP and magnesium. alpha-casein is the usual test substrate. In the absence of ATP, only oligopeptides shorter than five residues are hydrolyzed (such as succinyl-Leu-Tyr-|-NHMec, and Leu-Tyr-Leu-|-Tyr-Trp, in which cleavage of the -Tyr-|-Leu- and -Tyr-|-Trp bonds also occurs).. Cleaves peptides in various proteins in a process that requires ATP hydrolysis. Has a chymotrypsin-like activity. Plays a major role in the degradation of misfolded proteins. This is ATP-dependent Clp protease proteolytic subunit from Anaeromyxobacter sp. (strain K).